The chain runs to 268 residues: 4-hydroxy-tetrahydrodipicolinate reductase (268 aa).

NAD(+)-binding positions include 8–13 and glutamate 34; that span reads GGGGKM. An NADP(+)-binding site is contributed by lysine 35. NAD(+) is bound by residues 98–100 and 122–125; these read GST and APNM. The active-site Proton donor/acceptor is histidine 155. Residue histidine 156 coordinates (S)-2,3,4,5-tetrahydrodipicolinate. Lysine 159 acts as the Proton donor in catalysis. 165–166 contributes to the (S)-2,3,4,5-tetrahydrodipicolinate binding site; sequence GT.

The protein belongs to the DapB family.

The protein resides in the cytoplasm. It carries out the reaction (S)-2,3,4,5-tetrahydrodipicolinate + NAD(+) + H2O = (2S,4S)-4-hydroxy-2,3,4,5-tetrahydrodipicolinate + NADH + H(+). It catalyses the reaction (S)-2,3,4,5-tetrahydrodipicolinate + NADP(+) + H2O = (2S,4S)-4-hydroxy-2,3,4,5-tetrahydrodipicolinate + NADPH + H(+). It functions in the pathway amino-acid biosynthesis; L-lysine biosynthesis via DAP pathway; (S)-tetrahydrodipicolinate from L-aspartate: step 4/4. Catalyzes the conversion of 4-hydroxy-tetrahydrodipicolinate (HTPA) to tetrahydrodipicolinate. The chain is 4-hydroxy-tetrahydrodipicolinate reductase from Syntrophus aciditrophicus (strain SB).